Here is a 362-residue protein sequence, read N- to C-terminus: 45 kDa calcium-binding protein (362 aa).

Positions 1 to 36 (MVWPWVAMASRWGPLIGLAPCCLWLLGAVLLMDASA) are cleaved as a signal peptide. N40 carries N-linked (GlcNAc...) asparagine glycosylation. 2 EF-hand domains span residues 98–133 (RSRR…KTAE) and 137–172 (EAME…SKGH). Phosphoserine is present on S99. Positions 111, 113, 115, 117, 122, 150, 152, 154, 156, and 161 each coordinate Ca(2+). The residue at position 193 (T193) is a Phosphothreonine. 4 EF-hand domains span residues 197 to 232 (LENL…HSRG), 233 to 268 (MLRF…TVEN), 278 to 313 (WVKD…MNEY), and 314 to 349 (NALN…FTGS). D213 contributes to the Ca(2+) binding site. T217 bears the Phosphothreonine mark. 6 residues coordinate Ca(2+): E220, D246, D248, D250, Q252, and E257. T265 carries the phosphothreonine modification. Residues D291, N293, and D295 each coordinate Ca(2+). T299 carries the post-translational modification Phosphothreonine. Ca(2+) is bound by residues E302, D327, N329, N331, H333, and E338. The interval 309–362 (PMNEYNALNEAKQMIAVADENQNHHLEPEEVLKYSEFFTGSKLVDYARSVHEEF) is necessary for intracellular retention in Golgi apparatus lumen.

The protein belongs to the CREC family. In terms of assembly, isoform 5 interacts with STXBP1; the interaction is enhanced in presence of calcium. Isoform 5 interacts with STX3. Ubiquitous. Isoform 5 is expressed in pancreas.

It localises to the golgi apparatus lumen. It is found in the cytoplasm. The protein resides in the cell membrane. The protein localises to the cell projection. Its subcellular location is the bleb. In terms of biological role, may regulate calcium-dependent activities in the endoplasmic reticulum lumen or post-ER compartment. Functionally, isoform 5 may be involved in the exocytosis of zymogens by pancreatic acini. The polypeptide is 45 kDa calcium-binding protein (SDF4) (Homo sapiens (Human)).